Here is a 202-residue protein sequence, read N- to C-terminus: Nucleoid occlusion factor SlmA (202 aa).

The region spanning 14-75 is the HTH tetR-type domain; the sequence is KERQQQVLEV…ALIERIEQTL (62 aa). A DNA-binding region (H-T-H motif) is located at residues 38–57; the sequence is TTERLAKAVGVSEGALYRYF.

Belongs to the nucleoid occlusion factor SlmA family. Homodimer. Interacts with FtsZ.

It is found in the cytoplasm. The protein resides in the nucleoid. Required for nucleoid occlusion (NO) phenomenon, which prevents Z-ring formation and cell division over the nucleoid. Acts as a DNA-associated cell division inhibitor that binds simultaneously chromosomal DNA and FtsZ, and disrupts the assembly of FtsZ polymers. SlmA-DNA-binding sequences (SBS) are dispersed on non-Ter regions of the chromosome, preventing FtsZ polymerization at these regions. The polypeptide is Nucleoid occlusion factor SlmA (Actinobacillus pleuropneumoniae serotype 5b (strain L20)).